A 292-amino-acid polypeptide reads, in one-letter code: Insulin-like growth factor-binding protein 3 (292 aa).

Positions 1–27 (MHPARPALWAAALTALTLLRGPPVARA) are cleaved as a signal peptide. The IGFBP N-terminal domain maps to 36-119 (PVVRCEPCDA…LNGRGFCANA (84 aa)). 6 disulfides stabilise this stretch: C40-C69, C43-C71, C51-C72, C60-C75, C83-C96, and C90-C116. N-linked (GlcNAc...) asparagine glycans are attached at residues N118, N124, and N137. Disordered stretches follow at residues 127-161 (AYLPSQPSPGNTTESEEDHNAGSVESQVVPSTHRV) and 191-211 (YESQSTDTQNFSSESKRETEY). Residues 129–139 (LPSQPSPGNTT) show a composition bias toward polar residues. S149 carries the post-translational modification Phosphoserine. A compositionally biased stretch (polar residues) spans 192-203 (ESQSTDTQNFSS). The N-linked (GlcNAc...) asparagine glycan is linked to N200. S202 is modified (phosphoserine). The Thyroglobulin type-1 domain maps to 211 to 286 (YGPCRREMED…DTKGKDDVHC (76 aa)). 3 cysteine pairs are disulfide-bonded: C214-C241, C252-C263, and C265-C286.

As to quaternary structure, interacts with XLKD1. Binds IGF2 more than IGF1. Forms a ternary complex of about 140 to 150 kDa with IGF1 or IGF2 and a 85 kDa glycoprotein (ALS). Interacts with humanin; humanin competes with importin KPNB1 for binding to IGFBP3, blocking IGFBP3 nuclear import and IGFBP3-mediated apoptosis. Interacts with TMEM219. Interacts with RXRA; this interaction modulates the transcriptional activity of RXRA. Interacts with LRP1; this interaction mediates cell growth inhibition independent of IGF1. In terms of processing, phosphorylated by FAM20C in the extracellular medium. Phosphorylated by CK2; resulting in decreased nuclear localization.

It is found in the secreted. The protein localises to the nucleus. Multifunctional protein that plays a critical role in regulating the availability of IGFs such as IGF1 and IGF2 to their receptors and thereby regulates IGF-mediated cellular processes including proliferation, differentiation, and apoptosis in a cell-type specific manner. Also exhibits IGF-independent antiproliferative and apoptotic effects mediated by its receptor TMEM219/IGFBP-3R. Inhibits the positive effect of humanin on insulin sensitivity. Promotes testicular germ cell apoptosis. Acts via LRP-1/alpha2M receptor, also known as TGF-beta type V receptor, to mediate cell growth inhibition independent of IGF1. Mechanistically, induces serine-specific dephosphorylation of IRS1 or IRS2 upon ligation to its receptor, leading to the inhibitory cascade. In the nucleus, interacts with transcription factors such as retinoid X receptor-alpha/RXRA to regulate transcriptional signaling and apoptosis. This chain is Insulin-like growth factor-binding protein 3 (Igfbp3), found in Rattus norvegicus (Rat).